We begin with the raw amino-acid sequence, 121 residues long: uncharacterized protein (121 aa).

The protein to M.jannaschii MJ0989.

This is an uncharacterized protein from Methanopyrus kandleri (strain AV19 / DSM 6324 / JCM 9639 / NBRC 100938).